The chain runs to 479 residues: Muscarinic acetylcholine receptor M4 (479 aa).

Topologically, residues 1 to 31 (MANFTPVNGSSGNQSVRLVTSSSHNRYETVE) are extracellular. 2 N-linked (GlcNAc...) asparagine glycosylation sites follow: asparagine 8 and asparagine 13. The chain crosses the membrane as a helical span at residues 32–54 (MVFIATVTGSLSLVTVVGNILVM). Residues 55–68 (LSIKVNRQLQTVNN) lie on the Cytoplasmic side of the membrane. The chain crosses the membrane as a helical span at residues 69–89 (YFLFSLACADLIIGAFSMNLY). Topologically, residues 90-106 (TVYIIKGYWPLGAVVCD) are extracellular. A disulfide bond links cysteine 105 and cysteine 185. A helical membrane pass occupies residues 107 to 128 (LWLALDYVVSNASVMNLLIISF). Topologically, residues 129–148 (DRYFCVTKPLTYPARRTTKM) are cytoplasmic. Residues 149–171 (AGLMIAAAWVLSFVLWAPAILFW) traverse the membrane as a helical segment. Residues 172–193 (QFVVGKRTVPDNQCFIQFLSNP) are Extracellular-facing. The helical transmembrane segment at 194-216 (AVTFGTAIAAFYLPVVIMTVLYI) threads the bilayer. Topologically, residues 217–401 (HISLASRSRV…AARERKVTRT (185 aa)) are cytoplasmic. The disordered stretch occupies residues 271–333 (KLEEAPPPAL…PAPPLQPRAL (63 aa)). The span at 275 to 286 (APPPALPPPPRP) shows a compositional bias: pro residues. The span at 294-304 (NESSSGSATQN) shows a compositional bias: polar residues. Residues 402–422 (IFAILLAFILTWTPYNVMVLV) traverse the membrane as a helical segment. Residues 423 to 436 (NTFCQSCIPDTVWS) are Extracellular-facing. The chain crosses the membrane as a helical span at residues 437 to 456 (IGYWLCYVNSTINPACYALC). Topologically, residues 457–479 (NATFKKTFRHLLLCQYRNIGTAR) are cytoplasmic. Phosphothreonine occurs at positions 459, 463, and 477.

It belongs to the G-protein coupled receptor 1 family. Muscarinic acetylcholine receptor subfamily. CHRM4 sub-subfamily.

It localises to the cell membrane. The protein resides in the postsynaptic cell membrane. Its function is as follows. The muscarinic acetylcholine receptor mediates various cellular responses, including inhibition of adenylate cyclase, breakdown of phosphoinositides and modulation of potassium channels through the action of G proteins. Primary transducing effect is inhibition of adenylate cyclase. This is Muscarinic acetylcholine receptor M4 (CHRM4) from Homo sapiens (Human).